The sequence spans 178 residues: Large ribosomal subunit protein eL20y (178 aa).

It belongs to the eukaryotic ribosomal protein eL20 family.

The protein is Large ribosomal subunit protein eL20y (RPL18AB) of Arabidopsis thaliana (Mouse-ear cress).